The chain runs to 301 residues: MLIHPNFDPIAIHLGPLAVRWYGLMYLVAFIAAIVVGRLRLRLPYVAAQGWTVKDIDDMLFYGVLGTILGGRLGYVLFYKASFYFAHPLDIFKVWEGGMSFHGGFLGVTLAMVLFAYQRKRSWLQVTDFVAPMVPTGLAAGRLGNFINGELWGRVTDPSSPWAMLFPGAAPDDAAWLTAHPQLAAQWHLNEVFAQYHMLPRHPSELYEIALEGVALFFVLIFFSRKPKPMGAISAVFLIGYGLARFTVEFAREPDDFLGLLAMGLSMGQWLSLPMILVGIGLLVWSYRRARHEPAQAVSVN.

The next 3 helical transmembrane spans lie at 17–37 (LAVRWYGLMYLVAFIAAIVVG), 59–79 (MLFYGVLGTILGGRLGYVLFY), and 97–117 (GGMSFHGGFLGVTLAMVLFAY). R142 contacts a 1,2-diacyl-sn-glycero-3-phospho-(1'-sn-glycerol). 2 helical membrane passes run 230–250 (MGAISAVFLIGYGLARFTVEF) and 265–285 (LSMGQWLSLPMILVGIGLLVW).

It belongs to the Lgt family.

It localises to the cell inner membrane. The enzyme catalyses L-cysteinyl-[prolipoprotein] + a 1,2-diacyl-sn-glycero-3-phospho-(1'-sn-glycerol) = an S-1,2-diacyl-sn-glyceryl-L-cysteinyl-[prolipoprotein] + sn-glycerol 1-phosphate + H(+). It functions in the pathway protein modification; lipoprotein biosynthesis (diacylglyceryl transfer). Functionally, catalyzes the transfer of the diacylglyceryl group from phosphatidylglycerol to the sulfhydryl group of the N-terminal cysteine of a prolipoprotein, the first step in the formation of mature lipoproteins. This is Phosphatidylglycerol--prolipoprotein diacylglyceryl transferase from Paraburkholderia phytofirmans (strain DSM 17436 / LMG 22146 / PsJN) (Burkholderia phytofirmans).